Reading from the N-terminus, the 312-residue chain is Taste receptor type 2 member 9 (312 aa).

The Extracellular segment spans residues 1-9 (MPSAIEAIY). A helical transmembrane segment spans residues 10–32 (IILIAGELTIGIWGNGFIVLVNC). At 33–52 (IDWLKRRDVSLIDIILISLA) the chain is on the cytoplasmic side. A helical transmembrane segment spans residues 53–72 (ISRICLLXVISLDGFFMLLF). Topologically, residues 73 to 86 (PTTYGNSVLVSIVB) are extracellular. The helical transmembrane segment at 87 to 109 (IVWTFANNSSLWFTSCLSIFYLL) threads the bilayer. Residues 110–128 (KIANISHPFFFWLKLKINK) are Cytoplasmic-facing. The chain crosses the membrane as a helical span at residues 129–146 (VILAILLGSFLISLVISV). Topologically, residues 147 to 180 (XMNDDMWYHLFKVSHEENITWEFKVSKIPGTFKQ) are extracellular. A glycan (N-linked (GlcNAc...) asparagine) is linked at Asn-164. Residues 181-203 (LTLNLGAMVPFILCLISFSLLLF) traverse the membrane as a helical segment. Residues 204–234 (SLVRHTKQIQLXATGFRDPSTEAHMRAIKAV) are Cytoplasmic-facing. The helical transmembrane segment at 235 to 257 (IIFLLLLIVYYPVFLVMTSSALI) threads the bilayer. Residues 258–261 (PQGK) lie on the Extracellular side of the membrane. A helical membrane pass occupies residues 262–284 (LVLMIGDIVTITFPSSHSFILIM). Topologically, residues 285–312 (GNSKLREAFLKMLRFVKRFLRRRKPFVP) are cytoplasmic.

Belongs to the G-protein coupled receptor T2R family.

The protein resides in the membrane. In terms of biological role, gustducin-coupled receptor implicated in the perception of bitter compounds in the oral cavity and the gastrointestinal tract. Signals through PLCB2 and the calcium-regulated cation channel TRPM5. The polypeptide is Taste receptor type 2 member 9 (TAS2R9) (Pongo pygmaeus (Bornean orangutan)).